The chain runs to 338 residues: DNA-directed RNA polymerase subunit alpha (338 aa).

The segment at 1 to 234 (MIHKNWAELI…DQLGIFVNFE (234 aa)) is alpha N-terminal domain (alpha-NTD). The interval 250–338 (FNPLLLKKVD…DLAKKFEDSF (89 aa)) is alpha C-terminal domain (alpha-CTD).

This sequence belongs to the RNA polymerase alpha chain family. In terms of assembly, homodimer. The RNAP catalytic core consists of 2 alpha, 1 beta, 1 beta' and 1 omega subunit. When a sigma factor is associated with the core the holoenzyme is formed, which can initiate transcription.

It catalyses the reaction RNA(n) + a ribonucleoside 5'-triphosphate = RNA(n+1) + diphosphate. In terms of biological role, DNA-dependent RNA polymerase catalyzes the transcription of DNA into RNA using the four ribonucleoside triphosphates as substrates. This chain is DNA-directed RNA polymerase subunit alpha, found in Roseobacter denitrificans (strain ATCC 33942 / OCh 114) (Erythrobacter sp. (strain OCh 114)).